Here is a 517-residue protein sequence, read N- to C-terminus: MACGGCSCEAAVGATASEAYLEGEPVREARELVAELCRHFYAQGWVTGTGGSITVKVNDPAVPLADRLIVMSPSGVQKERMVAEDMYVMAADGKVLSAPVAKPWPNKPPKCTDCAPLFMKAYLMRGAGAVIHSHGMETCIATMLNPGAKEFRMTHMEMIKGIKGHGYRDELVIPIVENTPYEYELTDSLSEAIAAYPKATAVLVRNHGIYVWGDSWINAKTQAECYHYLLDACIKLYQLGIDWTTPEHGPINNAKRQRSILSSEIPNGCRAADSSKCVVLDIEGTTTPISFVTDVMFPYARDNVREHLTSTFDSEETKDDIKLLRIQIEDDLRNGISGAVPVPPDEAGKEEVINSLVANVESMIKADRKITPLKQLQGHIWRTGFEKKELQGVVFEDVPVALKNWHSSGIKVYIYSSGSREAQRLLFGNTTYGDLRKFLCGYFDTTTGNKRETRSYFEVSQSLGVDSPSQILFITDVFQEAVAAKNTGFEVIISIRPGNAPLPDNHGFRTIKSFSEI.

Residues Met-1 to Asp-242 form a methylthioribulose-1-phosphate dehydratase region. Cys-114 contributes to the substrate binding site. Residues His-132 and His-134 each contribute to the Zn(2+) site. Catalysis depends on Glu-157, which acts as the Proton donor/acceptor; for methylthioribulose-1-phosphate dehydratase activity. His-207 is a binding site for Zn(2+). An enolase-phosphatase E1 region spans residues Val-278–Ile-517. The Mg(2+) site is built by Asp-281 and Glu-283. Substrate is bound by residues Ser-416–Ser-417 and Lys-450. A Mg(2+)-binding site is contributed by Asp-476.

In the N-terminal section; belongs to the aldolase class II family. MtnB subfamily. The protein in the C-terminal section; belongs to the HAD-like hydrolase superfamily. MasA/MtnC family. Zn(2+) serves as cofactor. It depends on Mg(2+) as a cofactor.

The enzyme catalyses 5-(methylsulfanyl)-D-ribulose 1-phosphate = 5-methylsulfanyl-2,3-dioxopentyl phosphate + H2O. It carries out the reaction 5-methylsulfanyl-2,3-dioxopentyl phosphate + H2O = 1,2-dihydroxy-5-(methylsulfanyl)pent-1-en-3-one + phosphate. It functions in the pathway amino-acid biosynthesis; L-methionine biosynthesis via salvage pathway; L-methionine from S-methyl-5-thio-alpha-D-ribose 1-phosphate: step 2/6. It participates in amino-acid biosynthesis; L-methionine biosynthesis via salvage pathway; L-methionine from S-methyl-5-thio-alpha-D-ribose 1-phosphate: step 3/6. Its pathway is amino-acid biosynthesis; L-methionine biosynthesis via salvage pathway; L-methionine from S-methyl-5-thio-alpha-D-ribose 1-phosphate: step 4/6. This chain is Probable bifunctional methylthioribulose-1-phosphate dehydratase/enolase-phosphatase E1, found in Sorghum bicolor (Sorghum).